The primary structure comprises 226 residues: Triosephosphate isomerase (226 aa).

The active-site Electrophile is the histidine 91. Glutamate 163 (proton acceptor) is an active-site residue. Glycine 169 and serine 207 together coordinate substrate.

This sequence belongs to the triosephosphate isomerase family. Homodimer.

Its subcellular location is the cytoplasm. The catalysed reaction is D-glyceraldehyde 3-phosphate = dihydroxyacetone phosphate. It functions in the pathway carbohydrate biosynthesis; gluconeogenesis. The protein operates within carbohydrate degradation; glycolysis; D-glyceraldehyde 3-phosphate from glycerone phosphate: step 1/1. In terms of biological role, involved in the gluconeogenesis. Catalyzes stereospecifically the conversion of dihydroxyacetone phosphate (DHAP) to D-glyceraldehyde-3-phosphate (G3P). The protein is Triosephosphate isomerase of Rhizobium etli (strain ATCC 51251 / DSM 11541 / JCM 21823 / NBRC 15573 / CFN 42).